Reading from the N-terminus, the 389-residue chain is MGGIGKKRVKKRTHLKADPIQEAAIPKSMVIRSGASEVGRSLSLLTRDLRHMMEPHTAIRLKERKANKIKDYLTMAGPLGVTHLLVLSRTDNNANLRIIRAPRGPSLHFRIHEYMLNKDVRRLQKNPKSPTTEFLTPPLLVMNHFNQNSSKDSPHEALLTTTFQNMFPPISVQHTNINSVKRVLLLNRRDDGYIDLRHFIISTKPVGISRPIRHLLKGEKKDSDIPDLHNVRDISDYVLHGDGISGAASDSEIEEDATVEIDRPVPTKTEENLLSASQLLKPKQQAIKLIEIGPRMTLELIKITEDAMGGKVLYHSHVHKSKEEIKQQDNFHEQSRALKEKRKKEQDENVRRKRENKKRRKDQKKEGITSSNKNDDSGNEGSSAYSDTE.

Residues 28–309 (SMVIRSGASE…LIKITEDAMG (282 aa)) enclose the Brix domain. Positions 323 to 350 (EEIKQQDNFHEQSRALKEKRKKEQDENV) are enriched in basic and acidic residues. Positions 323–389 (EEIKQQDNFH…EGSSAYSDTE (67 aa)) are disordered. Residues 351–362 (RRKRENKKRRKD) are compositionally biased toward basic residues. A Phosphoserine modification is found at Ser-377. Positions 379–389 (NEGSSAYSDTE) are enriched in polar residues.

The protein is Brix domain-containing protein C1B9.03c of Schizosaccharomyces pombe (strain 972 / ATCC 24843) (Fission yeast).